The chain runs to 354 residues: F-box/kelch-repeat protein At1g80440 (354 aa).

Residues 2 to 49 form the F-box domain; the sequence is ELIPNLPDDVARECLLRSSYQQFPVIASVCRAWNREVSLSQFLHQRKA. Kelch repeat units follow at residues 63–110, 115–163, 166–213, and 215–263; these read RVDP…CRLV, DLIV…ASDS, TVLV…FHAG, and FHVI…PPTC.

In Arabidopsis thaliana (Mouse-ear cress), this protein is F-box/kelch-repeat protein At1g80440.